A 248-amino-acid chain; its full sequence is Large ribosomal subunit protein uL4 (248 aa).

Positions 44 to 109 (QDTGTDEYAG…LDINTKERKL (66 aa)) are disordered. Basic and acidic residues predominate over residues 92 to 109 (PKAEKDRGLDINTKERKL).

It belongs to the universal ribosomal protein uL4 family. As to quaternary structure, part of the 50S ribosomal subunit.

Functionally, one of the primary rRNA binding proteins, this protein initially binds near the 5'-end of the 23S rRNA. It is important during the early stages of 50S assembly. It makes multiple contacts with different domains of the 23S rRNA in the assembled 50S subunit and ribosome. Its function is as follows. Forms part of the polypeptide exit tunnel. The polypeptide is Large ribosomal subunit protein uL4 (Natronomonas pharaonis (strain ATCC 35678 / DSM 2160 / CIP 103997 / JCM 8858 / NBRC 14720 / NCIMB 2260 / Gabara) (Halobacterium pharaonis)).